The primary structure comprises 289 residues: 4-hydroxybenzoate octaprenyltransferase (289 aa).

The next 8 helical transmembrane spans lie at 23 to 43, 46 to 66, 99 to 119, 141 to 161, 163 to 183, 213 to 233, 234 to 254, and 268 to 288; these read IGAL…TPGV, LWIL…GCVV, LFVV…TMTI, LPQV…FAAV, ESVP…AVAY, LIIG…GWLN, GLGW…VYQQ, and AFMN…MSYV.

The protein belongs to the UbiA prenyltransferase family. The cofactor is Mg(2+).

The protein resides in the cell inner membrane. The enzyme catalyses all-trans-octaprenyl diphosphate + 4-hydroxybenzoate = 4-hydroxy-3-(all-trans-octaprenyl)benzoate + diphosphate. Its pathway is cofactor biosynthesis; ubiquinone biosynthesis. Catalyzes the prenylation of para-hydroxybenzoate (PHB) with an all-trans polyprenyl group. Mediates the second step in the final reaction sequence of ubiquinone-8 (UQ-8) biosynthesis, which is the condensation of the polyisoprenoid side chain with PHB, generating the first membrane-bound Q intermediate 3-octaprenyl-4-hydroxybenzoate. The polypeptide is 4-hydroxybenzoate octaprenyltransferase (Citrobacter koseri (strain ATCC BAA-895 / CDC 4225-83 / SGSC4696)).